Reading from the N-terminus, the 500-residue chain is Aspartyl/glutamyl-tRNA(Asn/Gln) amidotransferase subunit B (500 aa).

It belongs to the GatB/GatE family. GatB subfamily. In terms of assembly, heterotrimer of A, B and C subunits.

The enzyme catalyses L-glutamyl-tRNA(Gln) + L-glutamine + ATP + H2O = L-glutaminyl-tRNA(Gln) + L-glutamate + ADP + phosphate + H(+). It carries out the reaction L-aspartyl-tRNA(Asn) + L-glutamine + ATP + H2O = L-asparaginyl-tRNA(Asn) + L-glutamate + ADP + phosphate + 2 H(+). Its function is as follows. Allows the formation of correctly charged Asn-tRNA(Asn) or Gln-tRNA(Gln) through the transamidation of misacylated Asp-tRNA(Asn) or Glu-tRNA(Gln) in organisms which lack either or both of asparaginyl-tRNA or glutaminyl-tRNA synthetases. The reaction takes place in the presence of glutamine and ATP through an activated phospho-Asp-tRNA(Asn) or phospho-Glu-tRNA(Gln). This Thermosynechococcus vestitus (strain NIES-2133 / IAM M-273 / BP-1) protein is Aspartyl/glutamyl-tRNA(Asn/Gln) amidotransferase subunit B.